The chain runs to 452 residues: Phosphoglucosamine mutase 2 (452 aa).

Catalysis depends on serine 101, which acts as the Phosphoserine intermediate. Residues serine 101, aspartate 245, aspartate 247, and aspartate 249 each coordinate Mg(2+). Serine 101 carries the post-translational modification Phosphoserine.

This sequence belongs to the phosphohexose mutase family. Mg(2+) is required as a cofactor. Post-translationally, activated by phosphorylation.

It catalyses the reaction alpha-D-glucosamine 1-phosphate = D-glucosamine 6-phosphate. In terms of biological role, catalyzes the conversion of glucosamine-6-phosphate to glucosamine-1-phosphate. The polypeptide is Phosphoglucosamine mutase 2 (Shewanella amazonensis (strain ATCC BAA-1098 / SB2B)).